The chain runs to 727 residues: Translation initiation factor IF-2, mitochondrial (727 aa).

A mitochondrion-targeting transit peptide spans 1 to 29 (MNRKILKLENLLRFHTICRQLHSLCQRRM). One can recognise a tr-type G domain in the interval 178–348 (PRSPVVTIMG…IALAEMLELK (171 aa)). A G1 region spans residues 187 to 194 (GHVDHGKT). 187 to 194 (GHVDHGKT) contributes to the GTP binding site. The segment at 212 to 216 (GITQH) is G2. Residues 234 to 237 (DTPG) and 288 to 291 (NKCD) each bind GTP. A G3 region spans residues 234-237 (DTPG). Residues 288-291 (NKCD) form a G4 region. Positions 324 to 326 (SAL) are G5. Position 688 is a phosphothreonine (T688).

This sequence belongs to the TRAFAC class translation factor GTPase superfamily. Classic translation factor GTPase family. IF-2 subfamily. As to quaternary structure, monomer.

Its subcellular location is the mitochondrion. In terms of biological role, one of the essential components for the initiation of protein synthesis. Protects formylmethionyl-tRNA from spontaneous hydrolysis and promotes its binding to the 30S ribosomal subunits. Also involved in the hydrolysis of GTP during the formation of the 70S ribosomal complex. This Bos taurus (Bovine) protein is Translation initiation factor IF-2, mitochondrial (MTIF2).